The chain runs to 53 residues: Chlorophyll a-b binding protein 1, chloroplastic (53 aa).

Residue F18 participates in chlorophyll b binding. Chlorophyll a-binding residues include E48 and H51. Position 53 (R53) interacts with chlorophyll b.

It belongs to the light-harvesting chlorophyll a/b-binding (LHC) protein family. As to quaternary structure, the LHC complex consists of chlorophyll a-b binding proteins. Binds at least 14 chlorophylls (8 Chl-a and 6 Chl-b) and carotenoids such as lutein and neoxanthin. is required as a cofactor. Post-translationally, photoregulated by reversible phosphorylation of its threonine residues.

The protein localises to the plastid. The protein resides in the chloroplast thylakoid membrane. In terms of biological role, the light-harvesting complex (LHC) functions as a light receptor, it captures and delivers excitation energy to photosystems with which it is closely associated. The protein is Chlorophyll a-b binding protein 1, chloroplastic of Populus euphratica (Euphrates poplar).